A 591-amino-acid chain; its full sequence is Transcriptional regulator PUL4 (591 aa).

The segment at residues 3-29 (CLECKKRKQKCDGQKPCRRCTKLNVKC) is a DNA-binding region (zn(2)-C6 fungal-type).

The protein localises to the nucleus. Its function is as follows. Transcription factor involved in regulation of the PUL gene cluster that mediates the formation of pulcherrimin, a red iron-containing pigment composed of two cyclized and modified leucine molecules that acts as a siderophore, a chelator that binds iron outside the cell for subsequent uptake. This is Transcriptional regulator PUL4 from Kluyveromyces lactis (strain ATCC 8585 / CBS 2359 / DSM 70799 / NBRC 1267 / NRRL Y-1140 / WM37) (Yeast).